The primary structure comprises 430 residues: Serine--tRNA ligase (430 aa).

237 to 239 (TAE) is a binding site for L-serine. Position 268-270 (268-270 (RSE)) interacts with ATP. Glu-291 is an L-serine binding site. 355-358 (EISS) contributes to the ATP binding site. Ser-391 is an L-serine binding site.

It belongs to the class-II aminoacyl-tRNA synthetase family. Type-1 seryl-tRNA synthetase subfamily. Homodimer. The tRNA molecule binds across the dimer.

It localises to the cytoplasm. The enzyme catalyses tRNA(Ser) + L-serine + ATP = L-seryl-tRNA(Ser) + AMP + diphosphate + H(+). The catalysed reaction is tRNA(Sec) + L-serine + ATP = L-seryl-tRNA(Sec) + AMP + diphosphate + H(+). The protein operates within aminoacyl-tRNA biosynthesis; selenocysteinyl-tRNA(Sec) biosynthesis; L-seryl-tRNA(Sec) from L-serine and tRNA(Sec): step 1/1. In terms of biological role, catalyzes the attachment of serine to tRNA(Ser). Is also able to aminoacylate tRNA(Sec) with serine, to form the misacylated tRNA L-seryl-tRNA(Sec), which will be further converted into selenocysteinyl-tRNA(Sec). This chain is Serine--tRNA ligase, found in Salmonella heidelberg (strain SL476).